The chain runs to 618 residues: Beta-glucosidase C (618 aa).

A signal peptide spans 1 to 19 (MRVDSTVLALVALATDCLG). 5 N-linked (GlcNAc...) asparagine glycosylation sites follow: asparagine 40, asparagine 82, asparagine 104, asparagine 211, and asparagine 263. Residue aspartate 330 is part of the active site. N-linked (GlcNAc...) asparagine glycosylation is found at asparagine 417, asparagine 448, asparagine 477, asparagine 482, asparagine 502, and asparagine 517.

Belongs to the glycosyl hydrolase 3 family.

The protein resides in the secreted. It catalyses the reaction Hydrolysis of terminal, non-reducing beta-D-glucosyl residues with release of beta-D-glucose.. It participates in glycan metabolism; cellulose degradation. In terms of biological role, beta-glucosidases are one of a number of cellulolytic enzymes involved in the degradation of cellulosic biomass. Catalyzes the last step releasing glucose from the inhibitory cellobiose. In Emericella nidulans (strain FGSC A4 / ATCC 38163 / CBS 112.46 / NRRL 194 / M139) (Aspergillus nidulans), this protein is Beta-glucosidase C (bglC).